We begin with the raw amino-acid sequence, 319 residues long: Putative replication factor C small subunit R395 (319 aa).

Gly45–Thr52 is a binding site for ATP.

Belongs to the activator 1 small subunits family. RfcS subfamily.

In terms of biological role, part of the RFC clamp loader complex which loads the PCNA sliding clamp onto DNA. The protein is Putative replication factor C small subunit R395 of Acanthamoeba polyphaga mimivirus (APMV).